The following is a 340-amino-acid chain: 4-hydroxythreonine-4-phosphate dehydrogenase (340 aa).

2 residues coordinate substrate: histidine 141 and threonine 142. Residues histidine 171, histidine 216, and histidine 271 each contribute to the a divalent metal cation site. Substrate-binding residues include lysine 279, asparagine 288, and arginine 297.

Belongs to the PdxA family. In terms of assembly, homodimer. Zn(2+) is required as a cofactor. It depends on Mg(2+) as a cofactor. The cofactor is Co(2+).

It is found in the cytoplasm. It catalyses the reaction 4-(phosphooxy)-L-threonine + NAD(+) = 3-amino-2-oxopropyl phosphate + CO2 + NADH. It functions in the pathway cofactor biosynthesis; pyridoxine 5'-phosphate biosynthesis; pyridoxine 5'-phosphate from D-erythrose 4-phosphate: step 4/5. Functionally, catalyzes the NAD(P)-dependent oxidation of 4-(phosphooxy)-L-threonine (HTP) into 2-amino-3-oxo-4-(phosphooxy)butyric acid which spontaneously decarboxylates to form 3-amino-2-oxopropyl phosphate (AHAP). The polypeptide is 4-hydroxythreonine-4-phosphate dehydrogenase (Desulforapulum autotrophicum (strain ATCC 43914 / DSM 3382 / VKM B-1955 / HRM2) (Desulfobacterium autotrophicum)).